Here is a 215-residue protein sequence, read N- to C-terminus: Probable nicotinate-nucleotide adenylyltransferase (215 aa).

Belongs to the NadD family.

The catalysed reaction is nicotinate beta-D-ribonucleotide + ATP + H(+) = deamido-NAD(+) + diphosphate. Its pathway is cofactor biosynthesis; NAD(+) biosynthesis; deamido-NAD(+) from nicotinate D-ribonucleotide: step 1/1. In terms of biological role, catalyzes the reversible adenylation of nicotinate mononucleotide (NaMN) to nicotinic acid adenine dinucleotide (NaAD). The protein is Probable nicotinate-nucleotide adenylyltransferase of Shewanella sp. (strain W3-18-1).